We begin with the raw amino-acid sequence, 416 residues long: LL-diaminopimelate aminotransferase (416 aa).

The substrate site is built by Tyr-25 and Gly-52. Residues Tyr-78, 115–116 (SK), Tyr-140, Asn-190, Tyr-221, and 248–250 (SFS) each bind pyridoxal 5'-phosphate. The substrate site is built by Lys-116, Tyr-140, and Asn-190. Lys-251 carries the post-translational modification N6-(pyridoxal phosphate)lysine. Arg-259 contributes to the pyridoxal 5'-phosphate binding site.

The protein belongs to the class-I pyridoxal-phosphate-dependent aminotransferase family. Homodimer. Pyridoxal 5'-phosphate is required as a cofactor.

Its subcellular location is the cytoplasm. It carries out the reaction (2S,6S)-2,6-diaminopimelate + 2-oxoglutarate = (S)-2,3,4,5-tetrahydrodipicolinate + L-glutamate + H2O + H(+). Its pathway is amino-acid biosynthesis; L-lysine biosynthesis via DAP pathway; LL-2,6-diaminopimelate from (S)-tetrahydrodipicolinate (aminotransferase route): step 1/1. Its function is as follows. Involved in the synthesis of meso-diaminopimelate (m-DAP or DL-DAP), required for both lysine and peptidoglycan biosynthesis. Catalyzes the direct conversion of tetrahydrodipicolinate to LL-diaminopimelate. This Methanococcus maripaludis (strain DSM 14266 / JCM 13030 / NBRC 101832 / S2 / LL) protein is LL-diaminopimelate aminotransferase (dapL).